We begin with the raw amino-acid sequence, 309 residues long: Aspartate carbamoyltransferase catalytic subunit (309 aa).

Carbamoyl phosphate is bound by residues Arg57 and Thr58. Lys86 provides a ligand contact to L-aspartate. Carbamoyl phosphate-binding residues include Arg107, His135, and Gln138. The L-aspartate site is built by Arg168 and Arg229. 2 residues coordinate carbamoyl phosphate: Leu269 and Pro270.

This sequence belongs to the aspartate/ornithine carbamoyltransferase superfamily. ATCase family. In terms of assembly, heterooligomer of catalytic and regulatory chains.

The enzyme catalyses carbamoyl phosphate + L-aspartate = N-carbamoyl-L-aspartate + phosphate + H(+). It functions in the pathway pyrimidine metabolism; UMP biosynthesis via de novo pathway; (S)-dihydroorotate from bicarbonate: step 2/3. In terms of biological role, catalyzes the condensation of carbamoyl phosphate and aspartate to form carbamoyl aspartate and inorganic phosphate, the committed step in the de novo pyrimidine nucleotide biosynthesis pathway. This chain is Aspartate carbamoyltransferase catalytic subunit, found in Methanopyrus kandleri (strain AV19 / DSM 6324 / JCM 9639 / NBRC 100938).